The following is a 160-amino-acid chain: Arginine repressor (160 aa).

It belongs to the ArgR family.

Its subcellular location is the cytoplasm. Its pathway is amino-acid biosynthesis; L-arginine biosynthesis [regulation]. Functionally, regulates arginine biosynthesis genes. The sequence is that of Arginine repressor from Anaeromyxobacter sp. (strain K).